Reading from the N-terminus, the 109-residue chain is Nucleoid-associated protein AHA_2212 (109 aa).

Disordered regions lie at residues 1-23 and 88-109; these read MFGKGGMGNLMKQAQQMQERMQK and NKSKMGELTGGMQLPPGFKMPF. Residues 11–23 show a composition bias toward low complexity; the sequence is MKQAQQMQERMQK.

It belongs to the YbaB/EbfC family. As to quaternary structure, homodimer.

It is found in the cytoplasm. The protein localises to the nucleoid. Binds to DNA and alters its conformation. May be involved in regulation of gene expression, nucleoid organization and DNA protection. The protein is Nucleoid-associated protein AHA_2212 of Aeromonas hydrophila subsp. hydrophila (strain ATCC 7966 / DSM 30187 / BCRC 13018 / CCUG 14551 / JCM 1027 / KCTC 2358 / NCIMB 9240 / NCTC 8049).